A 1396-amino-acid chain; its full sequence is DNA-directed RNA polymerase subunit beta' (1396 aa).

4 residues coordinate Zn(2+): Cys72, Cys74, Cys87, and Cys90. Residues Asp463, Asp465, and Asp467 each coordinate Mg(2+). Residues Cys814, Cys889, Cys896, and Cys899 each contribute to the Zn(2+) site.

It belongs to the RNA polymerase beta' chain family. The RNAP catalytic core consists of 2 alpha, 1 beta, 1 beta' and 1 omega subunit. When a sigma factor is associated with the core the holoenzyme is formed, which can initiate transcription. It depends on Mg(2+) as a cofactor. Zn(2+) serves as cofactor.

The catalysed reaction is RNA(n) + a ribonucleoside 5'-triphosphate = RNA(n+1) + diphosphate. Its function is as follows. DNA-dependent RNA polymerase catalyzes the transcription of DNA into RNA using the four ribonucleoside triphosphates as substrates. The sequence is that of DNA-directed RNA polymerase subunit beta' from Chlamydia trachomatis serovar L2 (strain ATCC VR-902B / DSM 19102 / 434/Bu).